A 71-amino-acid chain; its full sequence is Small ribosomal subunit protein bS21 (71 aa).

The tract at residues 40–71 is disordered; sequence KPTQERKRKAAAAVKRNIRRTSRDVTKRKRLY. Over residues 45–71 the composition is skewed to basic residues; the sequence is RKRKAAAAVKRNIRRTSRDVTKRKRLY.

Belongs to the bacterial ribosomal protein bS21 family.

In Xylella fastidiosa (strain M23), this protein is Small ribosomal subunit protein bS21.